The chain runs to 173 residues: Co-chaperone protein HscB homolog (173 aa).

In terms of domain architecture, J spans 5-77; that stretch reads CHYALFDLQP…PRRARYLLAI (73 aa).

This sequence belongs to the HscB family. As to quaternary structure, interacts with HscA and stimulates its ATPase activity.

In terms of biological role, co-chaperone involved in the maturation of iron-sulfur cluster-containing proteins. Seems to help targeting proteins to be folded toward HscA. This chain is Co-chaperone protein HscB homolog, found in Pseudomonas putida (strain ATCC 700007 / DSM 6899 / JCM 31910 / BCRC 17059 / LMG 24140 / F1).